A 219-amino-acid chain; its full sequence is Elongation factor Ts (219 aa).

The involved in Mg(2+) ion dislocation from EF-Tu stretch occupies residues 82–85; that stretch reads TDFV.

It belongs to the EF-Ts family.

The protein localises to the cytoplasm. Its function is as follows. Associates with the EF-Tu.GDP complex and induces the exchange of GDP to GTP. It remains bound to the aminoacyl-tRNA.EF-Tu.GTP complex up to the GTP hydrolysis stage on the ribosome. The protein is Elongation factor Ts of Gloeobacter violaceus (strain ATCC 29082 / PCC 7421).